A 288-amino-acid chain; its full sequence is Diaminopimelate epimerase (288 aa).

The substrate site is built by Asn14 and Asn67. The Proton donor role is filled by Cys76. Substrate-binding positions include Gly77–Asn78, Asn166, Asn199, and Glu217–Arg218. Cys226 (proton acceptor) is an active-site residue. Substrate is bound at residue Gly227 to Thr228.

This sequence belongs to the diaminopimelate epimerase family. As to quaternary structure, homodimer.

The protein localises to the cytoplasm. It carries out the reaction (2S,6S)-2,6-diaminopimelate = meso-2,6-diaminopimelate. It participates in amino-acid biosynthesis; L-lysine biosynthesis via DAP pathway; DL-2,6-diaminopimelate from LL-2,6-diaminopimelate: step 1/1. Catalyzes the stereoinversion of LL-2,6-diaminopimelate (L,L-DAP) to meso-diaminopimelate (meso-DAP), a precursor of L-lysine and an essential component of the bacterial peptidoglycan. This is Diaminopimelate epimerase from Bacillus cytotoxicus (strain DSM 22905 / CIP 110041 / 391-98 / NVH 391-98).